The primary structure comprises 146 residues: Envelope protein OPG155 (146 aa).

A helical; Signal-anchor for type II membrane protein transmembrane segment spans residues 1–21 (MNSLSIFFIVVATAAVCLLFI). Over 22–146 (QSYSIYENYG…TECQFLKSVL (125 aa)) the chain is Virion surface.

Belongs to the orthopoxvirus OPG155 protein family. In terms of assembly, part of a stable entry-fusion complex (EFC) which is at least composed of proteins OPG143, OPG147, OPG155, OPG086, OPG094, OPG107, OPG104, and OPG099. Formation of the viral membrane is necessary for the assembly of the complex. Interacts directly with protein OPG107. In terms of processing, contains two intramolecular disulfide bonds. They are created by the viral disulfide bond formation pathway, a poxvirus-specific pathway that operates on the cytoplasmic side of the MV membranes.

Its subcellular location is the virion membrane. Envelope protein required for virus entry into host cell and for cell-cell fusion (syncytium formation). In Monkeypox virus (strain Zaire-96-I-16) (MPX), this protein is Envelope protein OPG155 (OPG155).